An 875-amino-acid chain; its full sequence is Probable ATP-dependent RNA helicase DDX10 (875 aa).

Residues 1–43 form a disordered region; it reads MGKTANSPGSGARPDPVRSFNRWKKKHSHRQNKKKQLRKQLKK. Thr-4 is subject to Phosphothreonine. Ser-7 is subject to Phosphoserine. Residues 21 to 41 show a composition bias toward basic residues; it reads NRWKKKHSHRQNKKKQLRKQL. Residues 69 to 97 carry the Q motif motif; sequence TRFSDFPLSKKTLKGLQEAQYRLVTEIQK. Residues 89–91, Gln-96, and 113–120 each bind ATP; these read YRL and AKTGSGKT. One can recognise a Helicase ATP-binding domain in the interval 100 to 274; sequence IGLALQGKDV…RLSLKNPEYV (175 aa). The DEAD box motif lies at 222-225; that stretch reads DEAD. Positions 287–448 constitute a Helicase C-terminal domain; sequence TLEQNYIVCE…EIKINPEKLI (162 aa). Position 539 is a phosphoserine (Ser-539). N6-acetyllysine is present on Lys-555. The tract at residues 562–631 is disordered; sequence GGKRLEGTEH…QFLDRDEEEE (70 aa). Positions 564–575 are enriched in basic and acidic residues; it reads KRLEGTEHRQDN. Thr-577 carries the post-translational modification Phosphothreonine. Acidic residues predominate over residues 577 to 593; sequence TGNEEQEEEEDDEEEME. Over residues 603–613 the composition is skewed to polar residues; sequence QAPSLPNTSEA. A Glycyl lysine isopeptide (Lys-Gly) (interchain with G-Cter in SUMO2) cross-link involves residue Lys-649. Residues 703-850 form a disordered region; sequence MQKSAIKDAE…HNRKKARWDT (148 aa). Positions 727–741 are enriched in basic and acidic residues; that stretch reads ERLQEEDKFDKEEYR. The span at 742-751 shows a compositional bias: basic residues; it reads KKIKAKHREK. Positions 752-771 are enriched in basic and acidic residues; sequence RLKEREARREANKRQAKAKD. Acidic residues predominate over residues 772-790; sequence EEEAFLDWSDDDDDDDDGF. Phosphoserine is present on Ser-780. Basic and acidic residues predominate over residues 812–821; it reads MENKISDTKK. Ser-831 bears the Phosphoserine mark.

The protein belongs to the DEAD box helicase family. DDX10/DBP4 subfamily. As to quaternary structure, interacts with AIM2; this interaction promotes AIM2 stability. Interacts with SCNA; this interaction causes DDX10 mislocalization to the nucleoplasm and cytoplasmic inclusions. High in testis but widely expressed.

Its subcellular location is the cytoplasm. It is found in the nucleus. It localises to the nucleolus. The enzyme catalyses ATP + H2O = ADP + phosphate + H(+). Putative ATP-dependent RNA helicase that plays various role in innate immunity or inflammation. Plays a role in the enhancement of AIM2-induced inflammasome activation by interacting with AIM2 and stabilizing its protein level. Negatively regulates viral infection by promoting interferon beta production and interferon stimulated genes/ISGs expression. In Homo sapiens (Human), this protein is Probable ATP-dependent RNA helicase DDX10 (DDX10).